The following is a 587-amino-acid chain: Protein cereblon (587 aa).

Disordered stretches follow at residues Met1–Tyr56, Asp78–Asn113, and Phe157–Gly195. Polar residues-rich tracts occupy residues Glu22–Gln31 and Ser86–Ser96. The span at Gln159–Glu168 shows a compositional bias: basic and acidic residues. Residues Thr170–Asp181 show a composition bias toward acidic residues. Positions Pro182–Pro191 are enriched in pro residues. The region spanning His227–Thr453 is the Lon N-terminal domain. Residues Glu452–Lys561 enclose the CULT domain. Zn(2+)-binding residues include Cys457, Cys460, Cys526, and Cys529.

It belongs to the CRBN family. Likely a component of a DCX (DDB1-CUL4-X-box) protein ligase complex. May interact with pic/DDB1. Post-translationally, ubiquitinated.

The protein resides in the nucleus. It functions in the pathway protein modification; protein ubiquitination. In terms of biological role, substrate recognition component of a DCX (DDB1-CUL4-X-box) E3 protein ligase complex that mediates the ubiquitination and subsequent proteasomal degradation of target proteins. Has an essential role in mediating growth by negatively regulating insulin signaling. It also has a role in maintaining presynaptic function in the neuromuscular junction synapses of third-instar larvae. This chain is Protein cereblon, found in Drosophila simulans (Fruit fly).